The primary structure comprises 317 residues: uncharacterized protein (317 aa).

A compositionally biased stretch (basic and acidic residues) spans 1–11; it reads MASAGAERRPG. The interval 1-164 is disordered; sequence MASAGAERRP…KAKKRKSLGA (164 aa). A compositionally biased stretch (polar residues) spans 19–34; it reads GQGQLTEEPGSAQTSE. 2 stretches are compositionally biased toward basic and acidic residues: residues 47–58 and 71–92; these read HEARGTQSEDQR and EGPK…ERGP. Basic residues-rich tracts occupy residues 100–110 and 151–161; these read RPRHGPKRKPV and KQHKKAKKRKS.

This is an uncharacterized protein from Homo sapiens (Human).